Reading from the N-terminus, the 624-residue chain is MQNKKIVILYGSETGNAQDFAHILSHKLKRLHFSHTLIKIGDYHPKSVLQCKYLFIICSTTGQGELPRNARENCNGRAQGTLWQFLKKSTLPADLLDHVNVAMLGLGDSSYPRFNFGIRKLHERIVNQLGASEIFPRLEADELGLAGSNKDTGNGVESVYYEFEKRIIAYMLEKYPNRKHDGKMMPRVGLAEDVYLKPSNILEISTVNGSTNDQLPDSKIQFVGDETIRHGTVKKNNQITAKDHFQDVRQFVFETEDHEAYHPGDTVSLYPENSDNDVELFLEAQPHWKKVADELLTITDLENCDRFRDGGVVKPLTLRTLLKYHFDIVSIPRQSFFMKTWTFANAHEDRPTDQELLEQQRDKLRQFGYGQDLQDLYDYCNRPRRSVLEVIQDFEFLKLPWEFALDYLPMIKPRFYSISSAPSDPNVELTIAIVRYKTLLRKVRKGLCTNYLLTLTENDTVRYKLQNNHLLHEDIIGKPIIMTSPGVGLAPMKCLIESNLFKDQYLFFGNRMKDKDFLYEDTLSMWKKEGKINLFTCFSRDPINSPHAKYVQDQLWNQSSLIADLILKKSAIVYICGSSGKMPVQVRLTIVEILKKHGNFENAEEAEHYLKEMERTDRYMQETW.

The region spanning 6-168 (IVILYGSETG…VYYEFEKRII (163 aa)) is the Flavodoxin-like domain. Residues 12 to 17 (SETGNA), 59 to 62 (STTG), 106 to 115 (LGDSSYPRFN), and E142 each bind FMN. The FAD-binding FR-type domain occupies 226–474 (ETIRHGTVKK…LQNNHLLHED (249 aa)). Residues R384, 414–417 (RFYS), and 446–449 (GLCT) contribute to the FAD site. Residues 539–540 (SR) and 548–552 (AKYVQ) contribute to the NADP(+) site. An FAD-binding site is contributed by W624.

This sequence belongs to the NADPH-dependent diflavin oxidoreductase NDOR1 family. It in the N-terminal section; belongs to the flavodoxin family. The protein in the C-terminal section; belongs to the flavoprotein pyridine nucleotide cytochrome reductase family. In terms of assembly, interacts with DRE2; as part of the cytosolic iron-sulfur (Fe-S) protein assembly (CIA) machinery. It depends on FAD as a cofactor. FMN serves as cofactor.

It localises to the cytoplasm. The protein resides in the mitochondrion. The enzyme catalyses 2 oxidized [2Fe-2S]-[protein] + NADPH = 2 reduced [2Fe-2S]-[protein] + NADP(+) + H(+). In terms of biological role, NADPH-dependent reductase which is a central component of the cytosolic iron-sulfur (Fe-S) protein assembly (CIA) machinery. Transfers electrons from NADPH via its FAD and FMN prosthetic groups to the [2Fe-2S] cluster of DRE2, another key component of the CIA machinery. In turn, this reduced cluster provides electrons for assembly of cytosolic iron-sulfur cluster proteins. Positively controls H(2)O(2)-induced cell death. This is NADPH-dependent diflavin oxidoreductase 1 from Kluyveromyces lactis (strain ATCC 8585 / CBS 2359 / DSM 70799 / NBRC 1267 / NRRL Y-1140 / WM37) (Yeast).